The following is a 462-amino-acid chain: ATP synthase subunit beta (462 aa).

Gly150 to Thr157 is a binding site for ATP.

This sequence belongs to the ATPase alpha/beta chains family. F-type ATPases have 2 components, CF(1) - the catalytic core - and CF(0) - the membrane proton channel. CF(1) has five subunits: alpha(3), beta(3), gamma(1), delta(1), epsilon(1). CF(0) has three main subunits: a(1), b(2) and c(9-12). The alpha and beta chains form an alternating ring which encloses part of the gamma chain. CF(1) is attached to CF(0) by a central stalk formed by the gamma and epsilon chains, while a peripheral stalk is formed by the delta and b chains.

Its subcellular location is the cell membrane. The enzyme catalyses ATP + H2O + 4 H(+)(in) = ADP + phosphate + 5 H(+)(out). Produces ATP from ADP in the presence of a proton gradient across the membrane. The catalytic sites are hosted primarily by the beta subunits. This is ATP synthase subunit beta from Wigglesworthia glossinidia brevipalpis.